Reading from the N-terminus, the 43-residue chain is Protein PsbN (43 aa).

Residues 5–27 (TLVAISISRLLVSFTGYALYTAF) traverse the membrane as a helical segment.

Belongs to the PsbN family.

The protein localises to the plastid. Its subcellular location is the chloroplast thylakoid membrane. Functionally, may play a role in photosystem I and II biogenesis. The polypeptide is Protein PsbN (Cycas taitungensis (Prince sago)).